Here is an 890-residue protein sequence, read N- to C-terminus: Protein FAM171A1 (890 aa).

The N-terminal stretch at M1–T21 is a signal peptide. The Extracellular segment spans residues K22–T303. 2 N-linked (GlcNAc...) asparagine glycosylation sites follow: N190 and N194. Residues V304 to L324 traverse the membrane as a helical segment. Residues L325–K890 are Cytoplasmic-facing. Phosphoserine occurs at positions 358, 360, 371, 422, 443, and 525. Disordered regions lie at residues A730–A759 and E818–K890. The segment covering N747–G757 has biased composition (basic and acidic residues). The span at R822–E833 shows a compositional bias: polar residues. Phosphoserine is present on residues S849 and S855. The span at E858–G869 shows a compositional bias: acidic residues. A compositionally biased stretch (basic and acidic residues) spans E870–P883.

This sequence belongs to the FAM171 family. As to quaternary structure, interacts with ADAM10, NSG1 and OAZ1.

Its subcellular location is the cell membrane. Its function is as follows. Involved in the regulation of the cytoskeletal dynamics, plays a role in actin stress fiber formation. The protein is Protein FAM171A1 (FAM171A1) of Pongo abelii (Sumatran orangutan).